The primary structure comprises 1064 residues: WD repeat-containing protein on Y chromosome (1064 aa).

8 WD repeats span residues 153 to 197 (EEVT…IRTA), 326 to 365 (RVPL…EPSA), 369 to 408 (GHNG…LLQT), 459 to 498 (THAA…RKII), 511 to 550 (IIDI…VVRN), 598 to 638 (FHTD…RRYS), 746 to 785 (KTGD…EAEK), and 827 to 866 (AHLK…LGTL). Basic and acidic residues predominate over residues 914–924 (PAKRAEVKAPE). 2 disordered regions span residues 914-935 (PAKR…QTDD) and 1023-1064 (GSAL…QQSE). The segment covering 925-935 (DRDEETAQTDD) has biased composition (acidic residues).

This chain is WD repeat-containing protein on Y chromosome, found in Drosophila pseudoobscura pseudoobscura (Fruit fly).